A 443-amino-acid chain; its full sequence is ATP-dependent protease ATPase subunit HslU (443 aa).

Residues isoleucine 18, 60–65 (GVGKTE), aspartate 256, glutamate 321, and arginine 393 each bind ATP.

It belongs to the ClpX chaperone family. HslU subfamily. In terms of assembly, a double ring-shaped homohexamer of HslV is capped on each side by a ring-shaped HslU homohexamer. The assembly of the HslU/HslV complex is dependent on binding of ATP.

It is found in the cytoplasm. Functionally, ATPase subunit of a proteasome-like degradation complex; this subunit has chaperone activity. The binding of ATP and its subsequent hydrolysis by HslU are essential for unfolding of protein substrates subsequently hydrolyzed by HslV. HslU recognizes the N-terminal part of its protein substrates and unfolds these before they are guided to HslV for hydrolysis. The chain is ATP-dependent protease ATPase subunit HslU from Yersinia pestis bv. Antiqua (strain Antiqua).